We begin with the raw amino-acid sequence, 105 residues long: uncharacterized protein (105 aa).

Disordered regions lie at residues 29-55 and 72-105; these read HTRVGVTDPDPRVPPLLPGPAGVTDES and EQRGDRRAVRCEPAGEPPLDDVRTPAAPAVRSGR. Over residues 72–81 the composition is skewed to basic and acidic residues; sequence EQRGDRRAVR.

This is an uncharacterized protein from Streptomyces coelicolor (strain ATCC BAA-471 / A3(2) / M145).